The primary structure comprises 200 residues: Recombination protein RecR (200 aa).

The C4-type zinc finger occupies 57-72; it reads CSECRTFTEEDTCAIC. The Toprim domain maps to 81–176; sequence GELCIVESPA…SASRIAHGVP (96 aa).

It belongs to the RecR family.

In terms of biological role, may play a role in DNA repair. It seems to be involved in an RecBC-independent recombinational process of DNA repair. It may act with RecF and RecO. The sequence is that of Recombination protein RecR from Aliivibrio salmonicida (strain LFI1238) (Vibrio salmonicida (strain LFI1238)).